Here is a 282-residue protein sequence, read N- to C-terminus: ATP phosphoribosyltransferase (282 aa).

This sequence belongs to the ATP phosphoribosyltransferase family. Long subfamily. The cofactor is Mg(2+).

It localises to the cytoplasm. The catalysed reaction is 1-(5-phospho-beta-D-ribosyl)-ATP + diphosphate = 5-phospho-alpha-D-ribose 1-diphosphate + ATP. Its pathway is amino-acid biosynthesis; L-histidine biosynthesis; L-histidine from 5-phospho-alpha-D-ribose 1-diphosphate: step 1/9. Feedback inhibited by histidine. Catalyzes the condensation of ATP and 5-phosphoribose 1-diphosphate to form N'-(5'-phosphoribosyl)-ATP (PR-ATP). Has a crucial role in the pathway because the rate of histidine biosynthesis seems to be controlled primarily by regulation of HisG enzymatic activity. The chain is ATP phosphoribosyltransferase from Saccharopolyspora erythraea (strain ATCC 11635 / DSM 40517 / JCM 4748 / NBRC 13426 / NCIMB 8594 / NRRL 2338).